The sequence spans 242 residues: Uridylate kinase (242 aa).

11–14 provides a ligand contact to ATP; sequence KLSG. An involved in allosteric activation by GTP region spans residues 19 to 24; sequence GNMGYG. UMP is bound at residue Gly53. The ATP site is built by Gly54 and Arg58. UMP-binding positions include Asp73 and 134-141; that span reads SGNPFFTT. Residues Thr161, Tyr167, and Asp170 each contribute to the ATP site.

The protein belongs to the UMP kinase family. In terms of assembly, homohexamer.

The protein resides in the cytoplasm. It carries out the reaction UMP + ATP = UDP + ADP. Its pathway is pyrimidine metabolism; CTP biosynthesis via de novo pathway; UDP from UMP (UMPK route): step 1/1. Its activity is regulated as follows. Allosterically activated by GTP. Inhibited by UTP. In terms of biological role, catalyzes the reversible phosphorylation of UMP to UDP. The chain is Uridylate kinase from Trichormus variabilis (strain ATCC 29413 / PCC 7937) (Anabaena variabilis).